A 234-amino-acid chain; its full sequence is Protein spitz (234 aa).

Residues 1 to 28 form the signal peptide; that stretch reads MHSTMSVQHGLVALVLIGCLAHPWHVEA. Residues 29 to 143 lie on the Lumenal side of the membrane; the sequence is CSSRTVPKPR…RPRPMLEKAS (115 aa). The tract at residues 33 to 71 is disordered; it reads TVPKPRSSISSSMSGTALPPTQAPVTSSTTMRTTTTTTP. The segment covering 56 to 71 has biased composition (low complexity); it reads PVTSSTTMRTTTTTTP. N-linked (GlcNAc...) asparagine glycosylation occurs at Asn74. In terms of domain architecture, EGF-like spans 78–122; it reads PTYKCPETFDAWYCLNDAHCFAVKIADLPVYSCECAIGFMGQRCE. 3 disulfides stabilise this stretch: Cys82/Cys97, Cys91/Cys110, and Cys112/Cys121. A helical transmembrane segment spans residues 144-164; sequence IASGAMCALVFMLFVCLAFYL. The Cytoplasmic segment spans residues 165–234; it reads RFEQRAAKKA…SFAIRRSNKL (70 aa).

As to quaternary structure, interacts with Star via the lumenal domain. Post-translationally, proteolytic processing by Rhomboid occurs in the Golgi. Cleavage takes place within the transmembrane domain close to residue 144 and the active growth factor is released. In terms of processing, N-glycosylated and O-glycosylated. As to expression, expressed throughout the embryo.

Its subcellular location is the cell membrane. The protein localises to the endoplasmic reticulum membrane. The protein resides in the golgi apparatus membrane. Ligand for the EGF receptor (Gurken). Involved in a number of unrelated developmental choices, for example, dorsal-ventral axis formation, glial migration, sensory organ determination, and muscle development. It is required for photoreceptor determination. In Drosophila melanogaster (Fruit fly), this protein is Protein spitz (spi).